We begin with the raw amino-acid sequence, 195 residues long: MATASFNMQSVFAGGLTTRKINTNKLFSAGSFPNLKRNYPVGVRCMAEGGPTNEDSSPAPSTSAAQPLPKSPSPPPPMKPKVSTKFSDLLAFSGPAPERINGRLAMVGFVAALAVELSKGENVLAQISDGGVSWFLGTTAILTLASLVPLFKGISVESKSKGIMTSDAELWNGRFAMLGLVALAFTEFVKGGTLV.

A chloroplast-targeting transit peptide spans Met-1–Met-46. The tract at residues Met-46 to Lys-81 is disordered. Low complexity predominate over residues Ser-56–Leu-68. Positions Pro-69–Lys-79 are enriched in pro residues. The next 3 helical transmembrane spans lie at Leu-104–Leu-124, Gly-131–Phe-151, and Phe-175–Val-195.

This sequence belongs to the ELIP/psbS family.

It localises to the plastid. Its subcellular location is the chloroplast thylakoid membrane. Functionally, prevents excess accumulation of free chlorophyll by inhibiting the entire chlorophyll biosynthesis pathway (e.g. 5-aminolevulinate synthesis and Mg-protoporphyrin IX chelatase activity), and hence prevent photooxidative stress. Probably involved in the integration of pigments into the mature light-harvesting pigment-protein complexes. Light-harvesting chlorophyll (LHC) a/b-binding protein required to ensure a high rate of chlorophyll accumulation during deetiolation in continuous high light. Involved in seed germination. May fulfill a photoprotective functions. This chain is Early light-induced protein 1, chloroplastic, found in Arabidopsis thaliana (Mouse-ear cress).